The following is a 423-amino-acid chain: D-tagatose-1,6-bisphosphate aldolase subunit GatZ (423 aa).

It belongs to the GatZ/KbaZ family. GatZ subfamily. Forms a complex with GatY.

Its pathway is carbohydrate metabolism; D-tagatose 6-phosphate degradation; D-glyceraldehyde 3-phosphate and glycerone phosphate from D-tagatose 6-phosphate: step 2/2. In terms of biological role, component of the tagatose-1,6-bisphosphate aldolase GatYZ that is required for full activity and stability of the Y subunit. Could have a chaperone-like function for the proper and stable folding of GatY. When expressed alone, GatZ does not show any aldolase activity. Is involved in the catabolism of galactitol. This Salmonella typhimurium (strain LT2 / SGSC1412 / ATCC 700720) protein is D-tagatose-1,6-bisphosphate aldolase subunit GatZ.